Consider the following 64-residue polypeptide: Large ribosomal subunit protein bL35 (64 aa).

The interval 1–22 (MPKAKTHSGASKRFRRTGTGKI) is disordered.

The protein belongs to the bacterial ribosomal protein bL35 family.

This chain is Large ribosomal subunit protein bL35, found in Mycobacterium tuberculosis (strain ATCC 25177 / H37Ra).